The sequence spans 147 residues: Protein phosphatase 1 regulatory subunit 14B (147 aa).

Low complexity predominate over residues 1-15 (MADSGPAGGAALAAP). Residues 1–55 (MADSGPAGGAALAAPAPGPGSGGAGPRVYFQSPPGAAGEGPGGADDEGPVRRQGK) are disordered. At Ala2 the chain carries N-acetylalanine. Ser21 carries the phosphoserine modification. Tyr29 is modified (phosphotyrosine). The residue at position 32 (Ser32) is a Phosphoserine. At Thr57 the chain carries Phosphothreonine. A coiled-coil region spans residues 61-103 (DRKELRKRLNLEEWILEQLTRLYDCQEEEIPELEIDVDELLDM).

The protein belongs to the PP1 inhibitor family. In terms of processing, phosphorylated primarily on Thr-57 by PKC (in vitro). An unknown Ser is also phosphorylated by PKC (in vitro).

It localises to the cytoplasm. Functionally, inhibitor of PPP1CA. Has over 50-fold higher inhibitory activity when phosphorylated. The sequence is that of Protein phosphatase 1 regulatory subunit 14B (PPP1R14B) from Sus scrofa (Pig).